A 4923-amino-acid polypeptide reads, in one-letter code: Bridge-like lipid transfer protein family member 1 (4923 aa).

A helical transmembrane segment spans residues 25-45 (FVWLLVATIMSCGWIIYLTYY). Disordered regions lie at residues 160-179 (NRDE…SVHI), 606-631 (HSKS…KPRW), 1203-1277 (SLHV…SARL), 1300-1334 (FSSE…DSST), 1357-1400 (TEEF…SVEG), 1471-1494 (TNKR…SEES), 1630-1660 (SAAK…DLSI), 1878-1948 (RDGV…PDSS), 2191-2235 (SKSH…LQCN), 2262-2281 (PHRA…RTGN), 2355-2375 (NTLD…QEDL), 2550-2655 (RYTA…SEQS), 2885-2910 (IRQP…VSIN), 3564-3596 (YSNS…IKVE), 3645-3695 (FSPT…RKSA), 3739-3797 (LHPS…SLQS), 3848-3884 (GMRD…AKGK), 4017-4071 (PTSA…TGPP), 4102-4124 (AVTG…SSVT), 4249-4309 (DGQT…AAAQ), and 4797-4827 (RMFA…EKEE). The span at 1210–1226 (SHSSASSSEENSSSSAA) shows a compositional bias: low complexity. The span at 1237-1248 (PSPSTELMNVTT) shows a compositional bias: polar residues. Low complexity predominate over residues 1260–1271 (SPLRSPLKRQSS). Residues 1641–1658 (TEGTTPGSLSTPHGQTDL) are compositionally biased toward polar residues. The span at 1887 to 1898 (SSGSQTGSGYST) shows a compositional bias: low complexity. Positions 1907 to 1920 (NDAQSPASEPNNNS) are enriched in polar residues. A compositionally biased stretch (acidic residues) spans 1921–1931 (DSDEQDEGVES). Composition is skewed to polar residues over residues 2208–2218 (PYQSLSYTSGD) and 2267–2281 (EQTA…RTGN). A compositionally biased stretch (polar residues) spans 2550 to 2560 (RYTAGSSSPTP). Positions 2606–2624 (TRSREPRGRGTLGRSERRT) are enriched in basic and acidic residues. The span at 3581–3595 (KRSDRPREDLPDIKV) shows a compositional bias: basic and acidic residues. A compositionally biased stretch (basic and acidic residues) spans 3746–3770 (TEHEDLALRRSCERSSRSLDQDSPP). Residues 4017–4039 (PTSATYPSEGQHTPSSTPPSVHN) show a composition bias toward polar residues. The span at 4044-4056 (PGGPSTGLGSPLG) shows a compositional bias: low complexity. Polar residues-rich tracts occupy residues 4249–4268 (DGQT…TPSH), 4276–4286 (TGRTRSVSDSS), and 4804–4814 (GQKSPTTQQDE). Over residues 4816 to 4827 (SSDKKEEREKEE) the composition is skewed to basic and acidic residues.

Its subcellular location is the cell membrane. The protein localises to the endoplasmic reticulum membrane. It is found in the mitochondrion membrane. Tube-forming lipid transport protein which provides phosphatidylethanolamine for glycosylphosphatidylinositol (GPI) anchor synthesis in the endoplasmic reticulum. Plays a role in endosomal trafficking and endosome recycling. Also involved in the actin cytoskeleton and cilia structural dynamics. Acts as a regulator of phagocytosis. This Danio rerio (Zebrafish) protein is Bridge-like lipid transfer protein family member 1 (bltp1).